The primary structure comprises 412 residues: Serine hydroxymethyltransferase (412 aa).

Residues leucine 117 and 121–123 each bind (6S)-5,6,7,8-tetrahydrofolate; that span reads GHL. Lysine 226 carries the N6-(pyridoxal phosphate)lysine modification.

The protein belongs to the SHMT family. Homodimer. The cofactor is pyridoxal 5'-phosphate.

The protein localises to the cytoplasm. The catalysed reaction is (6R)-5,10-methylene-5,6,7,8-tetrahydrofolate + glycine + H2O = (6S)-5,6,7,8-tetrahydrofolate + L-serine. The protein operates within one-carbon metabolism; tetrahydrofolate interconversion. It functions in the pathway amino-acid biosynthesis; glycine biosynthesis; glycine from L-serine: step 1/1. Its function is as follows. Catalyzes the reversible interconversion of serine and glycine with tetrahydrofolate (THF) serving as the one-carbon carrier. This reaction serves as the major source of one-carbon groups required for the biosynthesis of purines, thymidylate, methionine, and other important biomolecules. Also exhibits THF-independent aldolase activity toward beta-hydroxyamino acids, producing glycine and aldehydes, via a retro-aldol mechanism. This chain is Serine hydroxymethyltransferase, found in Staphylococcus aureus (strain bovine RF122 / ET3-1).